The chain runs to 225 residues: MSLVASLQLILPPRPRSTKLLCSLQSPKQEQELSSTSPPISLLPKLISFALAISLTSFSPALAIPSLSSSQPLTTPFTQSKFVQTGLLNGKIRPCPSTNPGCVSTNPTSSSFSFPLTIPETDTQDPIEKLKEAIMSTQKNPKFVVLEDTPYGRYVEAEVEGGGFSRDVMEFLVKQDVVAYRCMATKVTFVYPFTTAFGDSKGQEERLKKLIDQLGWYAPTFESME.

It localises to the plastid. It is found in the chloroplast thylakoid lumen. The polypeptide is Thylakoid lumenal 17.9 kDa protein, chloroplastic (Arabidopsis thaliana (Mouse-ear cress)).